The following is a 192-amino-acid chain: uncharacterized protein (192 aa).

It to R.meliloti RA0936 and y4nF.

This is an uncharacterized protein from Sinorhizobium fredii (strain NBRC 101917 / NGR234).